Consider the following 172-residue polypeptide: NADH-quinone oxidoreductase subunit B (172 aa).

The [4Fe-4S] cluster site is built by C46, C47, C111, and C141.

The protein belongs to the complex I 20 kDa subunit family. NDH-1 is composed of 14 different subunits. Subunits NuoB, C, D, E, F, and G constitute the peripheral sector of the complex. Requires [4Fe-4S] cluster as cofactor.

The protein resides in the cell membrane. It catalyses the reaction a quinone + NADH + 5 H(+)(in) = a quinol + NAD(+) + 4 H(+)(out). Its function is as follows. NDH-1 shuttles electrons from NADH, via FMN and iron-sulfur (Fe-S) centers, to quinones in the respiratory chain. The immediate electron acceptor for the enzyme in this species is believed to be a menaquinone. Couples the redox reaction to proton translocation (for every two electrons transferred, four hydrogen ions are translocated across the cytoplasmic membrane), and thus conserves the redox energy in a proton gradient. The chain is NADH-quinone oxidoreductase subunit B from Brevibacillus brevis (strain 47 / JCM 6285 / NBRC 100599).